The primary structure comprises 66 residues: Beta-mammal toxin Cv3 (66 aa).

The 66-residue stretch at 1–66 (KEGYIVNYYD…VWPLPNKTCN (66 aa)) folds into the LCN-type CS-alpha/beta domain. Disulfide bonds link cysteine 12/cysteine 65, cysteine 16/cysteine 41, cysteine 25/cysteine 46, and cysteine 29/cysteine 48.

In terms of tissue distribution, expressed by the venom gland.

It localises to the secreted. Functionally, beta toxins bind voltage-independently at site-4 of sodium channels (Nav) and reduces peak current and shifts the voltage of activation toward more negative potentials thereby affecting sodium channel activation and promoting spontaneous and repetitive firing. This toxin is strongly toxic to mice. The sequence is that of Beta-mammal toxin Cv3 from Centruroides villegasi (Scorpion).